The sequence spans 858 residues: Potassium channel KOR1 (858 aa).

A disordered region spans residues 1–41 (MGRGIGSKRRVEDDDGENMPGRKKKEEEEEEEDDDGEEEYE). The Cytoplasmic portion of the chain corresponds to 1–102 (MGRGIGSKRR…PDNKWYRLWT (102 aa)). Positions 27–41 (EEEEEEDDDGEEEYE) are enriched in acidic residues. The chain crosses the membrane as a helical span at residues 103 to 123 (RFILVWAVYSSFFTPLEFGFF). The Extracellular segment spans residues 124–130 (RGLPRNL). A helical membrane pass occupies residues 131–151 (FFLDIAGQIAFLIDIVLRFFV). Residues 152-174 (AYRDPDTYRMVHNPTSIALRYCK) are Cytoplasmic-facing. Residues 175-195 (SSFIFDLLGCFPWDAIYKACG) traverse the membrane as a helical segment. Topologically, residues 196 to 201 (SKEEVR) are extracellular. A helical; Voltage-sensor transmembrane segment spans residues 202–222 (YLLWIRLTRAMKVTEFFRSME). The Cytoplasmic segment spans residues 223–236 (KDIRINYLFTRIVK). A helical transmembrane segment spans residues 237 to 257 (LIVVELYCTHTAACIFYYLAT). Over 258 to 292 (TLPESMEGYTWIGSLQLGDYSYSHFREIDLTKRYM) the chain is Extracellular. The pore-forming intramembrane region spans 293-312 (TSLYFAIVTMATVGYGDIHA). Residues 313–316 (VNVR) lie on the Extracellular side of the membrane. A helical transmembrane segment spans residues 317–337 (EMIFIMIYVSFDMILGAYLIG). The Cytoplasmic segment spans residues 338-858 (NMTALIVKGS…GDDGGTEARQ (521 aa)). A nucleoside 3',5'-cyclic phosphate is bound at residue 419–539 (LFKGCSAEFI…RRILSNLSES (121 aa)). ANK repeat units lie at residues 559-592 (KQEA…DPKN), 596-625 (DGRS…DIDL), 629-658 (FGNT…KLSL), 660-689 (NAGS…DPNA), 693-722 (DHRA…SVFA), and 726-756 (WGTT…ELSR). In terms of domain architecture, KHA spans 772–858 (RCSVFPHHPW…GDDGGTEARQ (87 aa)).

This sequence belongs to the potassium channel family. Plant (TC 1.A.1.4) subfamily.

The protein localises to the membrane. Its function is as follows. Probable outward-rectifying potassium channel. This is Potassium channel KOR1 from Oryza sativa subsp. japonica (Rice).